The following is a 98-amino-acid chain: Sm-like protein LSM8 (98 aa).

Positions 2 to 78 constitute a Sm domain; it reads AATTGLETLV…IGVIGELDEE (77 aa).

It belongs to the snRNP Sm proteins family. In terms of assembly, component of the heptameric LSM2-LSM8 complex that forms a seven-membered ring structure with a donut shape. The LSM subunits are arranged in the order LSM8, LSM2, LSM3, LSM6, LSM5, LSM7 and LSM4. LSM8 subunit interacts only with its two neighboring subunits, LSM2 and LSM4. Interacts with the prefoldin co-chaperone subunits PFD1, PFD2, PFD3, PFD4, PFD5 and PFD6. Expressed in roots, leaves, stems, flowers and siliques.

It is found in the nucleus. Component of the nuclear LSM2-LSM8 complex which is involved splicing nuclear mRNAs. LSM2-LSM8 binds directly to the U6 small nuclear RNAs (snRNAs). LSM8 is essential for the formation of the nuclear LSM2-LSM8 complex involved in the accurate splicing of selected development-related mRNAs through the stabilization of the spliceosomal U6 snRNA. Plays a critical role in the regulation of development-related gene expression. This Arabidopsis thaliana (Mouse-ear cress) protein is Sm-like protein LSM8.